The sequence spans 337 residues: Cytoskeleton protein RodZ (337 aa).

The Cytoplasmic segment spans residues 1-111; that stretch reads MNTEATHDQN…LGKRRKKRDG (111 aa). The HTH cro/C1-type domain occupies 19 to 71; sequence LRNAREQLGLSQQAVAERLCLKVSTVRDIEEDKAPADLASTFLRGYIRSYARL. A DNA-binding region (H-T-H motif) is located at residues 30–49; sequence QQAVAERLCLKVSTVRDIEE. A helical; Signal-anchor for type II membrane protein transmembrane segment spans residues 112–132; sequence WLMTFTWLVLFVVVGLTGAWW. Residues 133-337 are Periplasmic-facing; that stretch reads WQNHKAQQEE…TLNAEQSPAQ (205 aa). A disordered region spans residues 155 to 220; sequence NAGGDSAQSV…QNAVVAPSQA (66 aa). Positions 160 to 192 are enriched in polar residues; the sequence is SAQSVPLDTSEAASQDSTPAPTAPVDSTATNAV. Residues 193–217 are compositionally biased toward low complexity; sequence PQTPDASATTTAPAADAQQNAVVAP.

It belongs to the RodZ family.

It localises to the cell inner membrane. Functionally, cytoskeletal protein that is involved in cell-shape control through regulation of the length of the long axis. In Citrobacter koseri (strain ATCC BAA-895 / CDC 4225-83 / SGSC4696), this protein is Cytoskeleton protein RodZ.